We begin with the raw amino-acid sequence, 307 residues long: Elongation factor Ts (307 aa).

The interval 80–83 is involved in Mg(2+) ion dislocation from EF-Tu; it reads TDFV.

This sequence belongs to the EF-Ts family.

It is found in the cytoplasm. Its function is as follows. Associates with the EF-Tu.GDP complex and induces the exchange of GDP to GTP. It remains bound to the aminoacyl-tRNA.EF-Tu.GTP complex up to the GTP hydrolysis stage on the ribosome. The protein is Elongation factor Ts of Albidiferax ferrireducens (strain ATCC BAA-621 / DSM 15236 / T118) (Rhodoferax ferrireducens).